The chain runs to 932 residues: Protocadherin gamma-A7 (932 aa).

Residues 1–28 form the signal peptide; sequence MAAQPRGGDCRGFVLLSILLGTPWEAWA. 6 consecutive Cadherin domains span residues 29–133, 134–242, 243–347, 348–452, 453–562, and 570–682; these read GRIL…VPRF, LTEE…TPVF, SLPQ…APEV, TMTS…PPTF, PHSS…PPEI, and DGST…EPSD. The Extracellular portion of the chain corresponds to 29-692; it reads GRILYSVSEE…GPYNYDLTLY (664 aa). N-linked (GlcNAc...) asparagine glycosylation is found at Asn419 and Asn545. The helical transmembrane segment at 693–713 threads the bilayer; sequence LVVAVAAVSCVFLAFVLVLLA. The Cytoplasmic portion of the chain corresponds to 714–932; sequence LRLRRWHKSR…KKKSGKKEKK (219 aa). Disordered regions lie at residues 804–841 and 902–932; these read VPSI…WPNN and ATLT…KEKK. Residues 806–841 show a composition bias toward polar residues; the sequence is SIQQAPPNTDWRFSQAQRPGTSGSQNGDDTGTWPNN. The segment covering 922 to 932 has biased composition (basic residues); the sequence is NKKKSGKKEKK.

It is found in the cell membrane. Potential calcium-dependent cell-adhesion protein. May be involved in the establishment and maintenance of specific neuronal connections in the brain. The sequence is that of Protocadherin gamma-A7 (PCDHGA7) from Pan troglodytes (Chimpanzee).